The chain runs to 188 residues: dCTP deaminase (188 aa).

Residues 111–116, 135–137, Gln156, Tyr170, and Gln180 each bind dCTP; these read KSTYAR and TLE. The active-site Proton donor/acceptor is the Glu137.

Belongs to the dCTP deaminase family. Homotrimer.

It catalyses the reaction dCTP + H2O + H(+) = dUTP + NH4(+). Its pathway is pyrimidine metabolism; dUMP biosynthesis; dUMP from dCTP (dUTP route): step 1/2. Catalyzes the deamination of dCTP to dUTP. This chain is dCTP deaminase, found in Neisseria meningitidis serogroup B (strain ATCC BAA-335 / MC58).